The following is a 490-amino-acid chain: MDSLVVLVLCLSCLLLLSLWRQSSGRGKLPPGPTPLPVIGNILQIGIKDISKSLTNLSKVYGPVFTLYFGLKPIVVLHGYEAVKEALIDLGEEFSGRGIFPLAERANRGFGIVFSNGKKWKEIRRFSLMTLRNFGMGKRSIEDRVQEEARCLVEELRKTKASPCDPTFILGCAPCNVICSIIFHKRFDYKDQQFLNLMEKLNENIKILSSPWIQICNNFSPIIDYFPGTHNKLLKNVAFMKSYILEKVKEHQESMDMNNPQDFIDCFLMKMEKEKHNQPSEFTIESLENTAVDLFGAGTETTSTTLRYALLLLLKHPEVTAKVQEEIERVIGRNRSPCMQDRSHMPYTDAVVHEVQRYIDLLPTSLPHAVTCDIKFRNYLIPKGTTILISLTSVLHDNKEFPNPEMFDPHHFLDEGGNFKKSKYFMPFSAGKRICVGEALAGMELFLFLTSILQNFNLKSLVDPKNLDTTPVVNGFASVPPFYQLCFIPV.

Residue Cys435 participates in heme binding.

The protein belongs to the cytochrome P450 family. It depends on heme as a cofactor.

It localises to the endoplasmic reticulum membrane. The protein resides in the microsome membrane. It catalyses the reaction an organic molecule + reduced [NADPH--hemoprotein reductase] + O2 = an alcohol + oxidized [NADPH--hemoprotein reductase] + H2O + H(+). The enzyme catalyses (5Z,8Z,11Z,14Z)-eicosatetraenoate + reduced [NADPH--hemoprotein reductase] + O2 = (8R,9S)-epoxy-(5Z,11Z,14Z)-eicosatrienoate + oxidized [NADPH--hemoprotein reductase] + H2O + H(+). The catalysed reaction is (5Z,8Z,11Z,14Z)-eicosatetraenoate + reduced [NADPH--hemoprotein reductase] + O2 = (8S,9R)-epoxy-(5Z,11Z,14Z)-eicosatrienoate + oxidized [NADPH--hemoprotein reductase] + H2O + H(+). It carries out the reaction (5Z,8Z,11Z,14Z)-eicosatetraenoate + reduced [NADPH--hemoprotein reductase] + O2 = (11R,12S)-epoxy-(5Z,8Z,14Z)-eicosatrienoate + oxidized [NADPH--hemoprotein reductase] + H2O + H(+). It catalyses the reaction (5Z,8Z,11Z,14Z)-eicosatetraenoate + reduced [NADPH--hemoprotein reductase] + O2 = (11S,12R)-epoxy-(5Z,8Z,14Z)-eicosatrienoate + oxidized [NADPH--hemoprotein reductase] + H2O + H(+). The enzyme catalyses (5Z,8Z,11Z,14Z)-eicosatetraenoate + reduced [NADPH--hemoprotein reductase] + O2 = (14R,15S)-epoxy-(5Z,8Z,11Z)-eicosatrienoate + oxidized [NADPH--hemoprotein reductase] + H2O + H(+). The catalysed reaction is (5Z,8Z,11Z,14Z)-eicosatetraenoate + reduced [NADPH--hemoprotein reductase] + O2 = (14S,15R)-epoxy-(5Z,8Z,11Z)-eicosatrienoate + oxidized [NADPH--hemoprotein reductase] + H2O + H(+). It carries out the reaction (5Z,8Z,11Z,14Z,17Z)-eicosapentaenoate + reduced [NADPH--hemoprotein reductase] + O2 = 8,9-epoxy-(5Z,11Z,14Z,17Z)-eicosatetraenoate + oxidized [NADPH--hemoprotein reductase] + H2O + H(+). It catalyses the reaction (5Z,8Z,11Z,14Z,17Z)-eicosapentaenoate + reduced [NADPH--hemoprotein reductase] + O2 = 11,12-epoxy-(5Z,8Z,14Z,17Z)-eicosatetraenoate + oxidized [NADPH--hemoprotein reductase] + H2O + H(+). The enzyme catalyses (5Z,8Z,11Z,14Z,17Z)-eicosapentaenoate + reduced [NADPH--hemoprotein reductase] + O2 = 14,15-epoxy-(5Z,8Z,11Z,17Z)-eicosatetraenoate + oxidized [NADPH--hemoprotein reductase] + H2O + H(+). The catalysed reaction is (5Z,8Z,11Z,14Z,17Z)-eicosapentaenoate + reduced [NADPH--hemoprotein reductase] + O2 = (17R,18S)-epoxy-(5Z,8Z,11Z,14Z)-eicosatetraenoate + oxidized [NADPH--hemoprotein reductase] + H2O + H(+). It carries out the reaction cholesterol + reduced [NADPH--hemoprotein reductase] + O2 = 25-hydroxycholesterol + oxidized [NADPH--hemoprotein reductase] + H2O + H(+). It catalyses the reaction 17beta-estradiol + reduced [NADPH--hemoprotein reductase] + O2 = 2-hydroxy-17beta-estradiol + oxidized [NADPH--hemoprotein reductase] + H2O + H(+). The enzyme catalyses estrone + reduced [NADPH--hemoprotein reductase] + O2 = 2-hydroxyestrone + oxidized [NADPH--hemoprotein reductase] + H2O + H(+). The catalysed reaction is (5Z,8Z,11Z,14Z)-eicosatetraenoate + reduced [NADPH--hemoprotein reductase] + O2 = (11R)-hydroxy-(5Z,8Z,12E,14Z)-eicosatetraenoate + oxidized [NADPH--hemoprotein reductase] + H2O + H(+). It carries out the reaction (5Z,8Z,11Z,14Z)-eicosatetraenoate + reduced [NADPH--hemoprotein reductase] + O2 = (12R)-hydroxy-(5Z,8Z,10E,14Z)-eicosatetraenoate + oxidized [NADPH--hemoprotein reductase] + H2O + H(+). It catalyses the reaction (5Z,8Z,11Z,14Z)-eicosatetraenoate + reduced [NADPH--hemoprotein reductase] + O2 = (15R)-hydroxy-(5Z,8Z,11Z,13E)-eicosatetraenoate + oxidized [NADPH--hemoprotein reductase] + H2O + H(+). The enzyme catalyses (5Z,8Z,11Z,14Z)-eicosatetraenoate + reduced [NADPH--hemoprotein reductase] + O2 = 10-hydroxy-(5Z,8Z,11Z,14Z)-eicosatetraenoate + oxidized [NADPH--hemoprotein reductase] + H2O + H(+). The catalysed reaction is (9Z,12Z)-octadecadienoate + reduced [NADPH--hemoprotein reductase] + O2 = (13R)-hydroxy-(9Z,11E)-octadecadienoate + oxidized [NADPH--hemoprotein reductase] + H2O + H(+). It carries out the reaction (9Z,12Z)-octadecadienoate + reduced [NADPH--hemoprotein reductase] + O2 = (9R)-hydroxy-(10E,12Z)-octadecadienoate + oxidized [NADPH--hemoprotein reductase] + H2O + H(+). It catalyses the reaction (5Z,8Z,11Z,14Z)-eicosatetraenoate + reduced [NADPH--hemoprotein reductase] + O2 = 19-hydroxy-(5Z,8Z,11Z,14Z)-eicosatetraenoate + oxidized [NADPH--hemoprotein reductase] + H2O + H(+). The enzyme catalyses (5Z,8Z,11Z,14Z)-eicosatetraenoate + reduced [NADPH--hemoprotein reductase] + O2 = 13(S)-hydroxy-(5Z,8Z,11Z,14Z)-eicosatetraenoate + oxidized [NADPH--hemoprotein reductase] + H2O + H(+). The catalysed reaction is (5Z,8Z,11Z,14Z)-eicosatetraenoate + reduced [NADPH--hemoprotein reductase] + O2 = 14,15-epoxy-(5Z,8Z,11Z)-eicosatrienoate + oxidized [NADPH--hemoprotein reductase] + H2O + H(+). It carries out the reaction (5Z,8Z,11Z,14Z)-eicosatetraenoate + reduced [NADPH--hemoprotein reductase] + O2 = 11,12-epoxy-(5Z,8Z,14Z)-eicosatrienoate + oxidized [NADPH--hemoprotein reductase] + H2O + H(+). It catalyses the reaction (5Z,8Z,11Z,14Z)-eicosatetraenoate + reduced [NADPH--hemoprotein reductase] + O2 = 13-hydroxy-(5Z,8Z,11Z,14Z)-eicosatetraenoate + oxidized [NADPH--hemoprotein reductase] + H2O + H(+). The enzyme catalyses (4R)-limonene + reduced [NADPH--hemoprotein reductase] + O2 = (1R,5S)-carveol + oxidized [NADPH--hemoprotein reductase] + H2O + H(+). The catalysed reaction is (4S)-limonene + reduced [NADPH--hemoprotein reductase] + O2 = (1S,5R)-carveol + oxidized [NADPH--hemoprotein reductase] + H2O + H(+). It carries out the reaction (4S)-limonene + reduced [NADPH--hemoprotein reductase] + O2 = (4S)-perillyl alcohol + oxidized [NADPH--hemoprotein reductase] + H2O + H(+). It participates in lipid metabolism; arachidonate metabolism. It functions in the pathway steroid metabolism; cholesterol metabolism. Its pathway is terpene metabolism; (4R)-limonene degradation. Functionally, a cytochrome P450 monooxygenase involved in the metabolism of various endogenous substrates, including fatty acids and steroids. Mechanistically, uses molecular oxygen inserting one oxygen atom into a substrate, and reducing the second into a water molecule, with two electrons provided by NADPH via cytochrome P450 reductase (NADPH--hemoprotein reductase). Catalyzes the epoxidation of double bonds of polyunsaturated fatty acids (PUFA). Catalyzes the hydroxylation of carbon-hydrogen bonds. Metabolizes cholesterol toward 25-hydroxycholesterol, a physiological regulator of cellular cholesterol homeostasis. Exhibits low catalytic activity for the formation of catechol estrogens from 17beta-estradiol (E2) and estrone (E1), namely 2-hydroxy E1 and E2. Catalyzes bisallylic hydroxylation and hydroxylation with double-bond migration of polyunsaturated fatty acids (PUFA). Also metabolizes plant monoterpenes such as limonene. Oxygenates (R)- and (S)-limonene to produce carveol and perillyl alcohol. Contributes to the wide pharmacokinetics variability of the metabolism of drugs such as S-warfarin, diclofenac, phenytoin, tolbutamide and losartan. In Homo sapiens (Human), this protein is Cytochrome P450 2C9.